Reading from the N-terminus, the 234-residue chain is Ubiquinone biosynthesis O-methyltransferase (234 aa).

4 residues coordinate S-adenosyl-L-methionine: R36, G56, D77, and M125.

Belongs to the methyltransferase superfamily. UbiG/COQ3 family.

It carries out the reaction a 3-demethylubiquinol + S-adenosyl-L-methionine = a ubiquinol + S-adenosyl-L-homocysteine + H(+). It catalyses the reaction a 3-(all-trans-polyprenyl)benzene-1,2-diol + S-adenosyl-L-methionine = a 2-methoxy-6-(all-trans-polyprenyl)phenol + S-adenosyl-L-homocysteine + H(+). Its pathway is cofactor biosynthesis; ubiquinone biosynthesis. In terms of biological role, O-methyltransferase that catalyzes the 2 O-methylation steps in the ubiquinone biosynthetic pathway. In Actinobacillus pleuropneumoniae serotype 5b (strain L20), this protein is Ubiquinone biosynthesis O-methyltransferase.